The chain runs to 908 residues: Protein translocase subunit SecA (908 aa).

ATP is bound by residues glutamine 87, 105–109, and aspartate 511; that span reads GEGKT. A compositionally biased stretch (basic and acidic residues) spans 559-570; it reads ERHESRRIDNQL. Disordered stretches follow at residues 559–582 and 841–908; these read ERHE…DPGS and RRRR…GRLE. Residues 847–856 show a composition bias toward low complexity; it reads LAQQMQRAQA. A compositionally biased stretch (acidic residues) spans 862–873; it reads TEEDSDAEEQAE. Residues cysteine 892, cysteine 894, cysteine 903, and histidine 904 each contribute to the Zn(2+) site. A compositionally biased stretch (basic residues) spans 898–908; the sequence is KKYKQCHGRLE.

Belongs to the SecA family. As to quaternary structure, monomer and homodimer. Part of the essential Sec protein translocation apparatus which comprises SecA, SecYEG and auxiliary proteins SecDF-YajC and YidC. Zn(2+) is required as a cofactor.

The protein resides in the cell inner membrane. Its subcellular location is the cytoplasm. It catalyses the reaction ATP + H2O + cellular proteinSide 1 = ADP + phosphate + cellular proteinSide 2.. Functionally, part of the Sec protein translocase complex. Interacts with the SecYEG preprotein conducting channel. Has a central role in coupling the hydrolysis of ATP to the transfer of proteins into and across the cell membrane, serving both as a receptor for the preprotein-SecB complex and as an ATP-driven molecular motor driving the stepwise translocation of polypeptide chains across the membrane. This Hahella chejuensis (strain KCTC 2396) protein is Protein translocase subunit SecA.